Here is a 447-residue protein sequence, read N- to C-terminus: Na(+)-translocating NADH-quinone reductase subunit A (447 aa).

This sequence belongs to the NqrA family. In terms of assembly, composed of six subunits; NqrA, NqrB, NqrC, NqrD, NqrE and NqrF.

It carries out the reaction a ubiquinone + n Na(+)(in) + NADH + H(+) = a ubiquinol + n Na(+)(out) + NAD(+). Its function is as follows. NQR complex catalyzes the reduction of ubiquinone-1 to ubiquinol by two successive reactions, coupled with the transport of Na(+) ions from the cytoplasm to the periplasm. NqrA to NqrE are probably involved in the second step, the conversion of ubisemiquinone to ubiquinol. This chain is Na(+)-translocating NADH-quinone reductase subunit A, found in Yersinia pseudotuberculosis serotype O:1b (strain IP 31758).